A 424-amino-acid polypeptide reads, in one-letter code: GTPase Obg (424 aa).

Residues 1-158 form the Obg domain; the sequence is MFIDTAKIFV…RWIKLELKLL (158 aa). The OBG-type G domain occupies 159 to 331; the sequence is ADVGLIGFPN…LMKEAARLLS (173 aa). Residues 165–172, 190–194, 212–215, 282–285, and 312–314 each bind GTP; these read GFPNVGKS, FTTLK, DIPG, NKSD, and SAA. Residues Ser-172 and Thr-192 each coordinate Mg(2+). Positions 345-424 constitute an OCT domain; that stretch reads RFIEEEKRFT…LNDFEFDFLL (80 aa).

It belongs to the TRAFAC class OBG-HflX-like GTPase superfamily. OBG GTPase family. As to quaternary structure, monomer. Mg(2+) is required as a cofactor.

The protein localises to the cytoplasm. Its function is as follows. An essential GTPase which binds GTP, GDP and possibly (p)ppGpp with moderate affinity, with high nucleotide exchange rates and a fairly low GTP hydrolysis rate. Plays a role in control of the cell cycle, stress response, ribosome biogenesis and in those bacteria that undergo differentiation, in morphogenesis control. The chain is GTPase Obg from Clostridium botulinum (strain Okra / Type B1).